A 219-amino-acid polypeptide reads, in one-letter code: Deoxyribose-phosphate aldolase (219 aa).

The active-site Proton donor/acceptor is D88. The active-site Schiff-base intermediate with acetaldehyde is the K150. Catalysis depends on K179, which acts as the Proton donor/acceptor.

This sequence belongs to the DeoC/FbaB aldolase family. DeoC type 1 subfamily.

The protein localises to the cytoplasm. It carries out the reaction 2-deoxy-D-ribose 5-phosphate = D-glyceraldehyde 3-phosphate + acetaldehyde. It participates in carbohydrate degradation; 2-deoxy-D-ribose 1-phosphate degradation; D-glyceraldehyde 3-phosphate and acetaldehyde from 2-deoxy-alpha-D-ribose 1-phosphate: step 2/2. Catalyzes a reversible aldol reaction between acetaldehyde and D-glyceraldehyde 3-phosphate to generate 2-deoxy-D-ribose 5-phosphate. This chain is Deoxyribose-phosphate aldolase, found in Aquifex aeolicus (strain VF5).